The chain runs to 452 residues: Poly(A) polymerase I (452 aa).

Catalysis depends on residues Asp68, Asp70, and Asp150. The tract at residues 427 to 452 (EQQRLHPKPKKKYYRPRRRKTTCSAE) is disordered. The segment covering 431-452 (LHPKPKKKYYRPRRRKTTCSAE) has biased composition (basic residues).

Belongs to the tRNA nucleotidyltransferase/poly(A) polymerase family.

The catalysed reaction is RNA(n) + ATP = RNA(n)-3'-adenine ribonucleotide + diphosphate. Functionally, adds poly(A) tail to the 3' end of many RNAs, which usually targets these RNAs for decay. Plays a significant role in the global control of gene expression, through influencing the rate of transcript degradation, and in the general RNA quality control. This Haemophilus influenzae (strain ATCC 51907 / DSM 11121 / KW20 / Rd) protein is Poly(A) polymerase I.